Reading from the N-terminus, the 767-residue chain is Protein transport protein Sec23B (767 aa).

Ala2 carries the post-translational modification N-acetylalanine. Zn(2+) is bound by residues Cys61, Cys66, Cys85, and Cys88. An N6-acetyllysine modification is found at Lys564. The Gelsolin-like repeat unit spans residues 634–720; sequence PEPVLLDSSS…EHGGSQARFL (87 aa).

The protein belongs to the SEC23/SEC24 family. SEC23 subfamily. COPII is composed of at least five proteins: the Sec23/24 complex, the Sec13/31 complex and Sar1. Interacts with SAR1A.

The protein localises to the cytoplasmic vesicle. It is found in the COPII-coated vesicle membrane. It localises to the endoplasmic reticulum membrane. Its subcellular location is the cytoplasm. The protein resides in the cytosol. Component of the coat protein complex II (COPII) which promotes the formation of transport vesicles from the endoplasmic reticulum (ER). The coat has two main functions, the physical deformation of the endoplasmic reticulum membrane into vesicles and the selection of cargo molecules for their transport to the Golgi complex. This is Protein transport protein Sec23B from Mus musculus (Mouse).